The following is a 216-amino-acid chain: ATP-dependent Clp protease proteolytic subunit (216 aa).

S103 acts as the Nucleophile in catalysis. H128 is an active-site residue. The tract at residues 197–216 is disordered; that stretch reads RRPALPGDDAPRDVSEGPTP.

It belongs to the peptidase S14 family. As to quaternary structure, fourteen ClpP subunits assemble into 2 heptameric rings which stack back to back to give a disk-like structure with a central cavity, resembling the structure of eukaryotic proteasomes.

Its subcellular location is the cytoplasm. The catalysed reaction is Hydrolysis of proteins to small peptides in the presence of ATP and magnesium. alpha-casein is the usual test substrate. In the absence of ATP, only oligopeptides shorter than five residues are hydrolyzed (such as succinyl-Leu-Tyr-|-NHMec, and Leu-Tyr-Leu-|-Tyr-Trp, in which cleavage of the -Tyr-|-Leu- and -Tyr-|-Trp bonds also occurs).. In terms of biological role, cleaves peptides in various proteins in a process that requires ATP hydrolysis. Has a chymotrypsin-like activity. Plays a major role in the degradation of misfolded proteins. The polypeptide is ATP-dependent Clp protease proteolytic subunit (Sphingopyxis alaskensis (strain DSM 13593 / LMG 18877 / RB2256) (Sphingomonas alaskensis)).